Reading from the N-terminus, the 184-residue chain is Holliday junction branch migration complex subunit RuvA (184 aa).

Positions 1 to 64 are domain I; that stretch reads MIKAIEGVVT…EDANLLYGFL (64 aa). The tract at residues 65-134 is domain II; that stretch reads DANEQKMFEM…IAELSDTKLI (70 aa). The segment at 134 to 137 is flexible linker; sequence ISDE. A domain III region spans residues 138–184; the sequence is SVPSYQNEALLALEALGFKREKIVKILPDCKSENTSDLIKEALKKLG.

This sequence belongs to the RuvA family. Homotetramer. Forms an RuvA(8)-RuvB(12)-Holliday junction (HJ) complex. HJ DNA is sandwiched between 2 RuvA tetramers; dsDNA enters through RuvA and exits via RuvB. An RuvB hexamer assembles on each DNA strand where it exits the tetramer. Each RuvB hexamer is contacted by two RuvA subunits (via domain III) on 2 adjacent RuvB subunits; this complex drives branch migration. In the full resolvosome a probable DNA-RuvA(4)-RuvB(12)-RuvC(2) complex forms which resolves the HJ.

The protein resides in the cytoplasm. Its function is as follows. The RuvA-RuvB-RuvC complex processes Holliday junction (HJ) DNA during genetic recombination and DNA repair, while the RuvA-RuvB complex plays an important role in the rescue of blocked DNA replication forks via replication fork reversal (RFR). RuvA specifically binds to HJ cruciform DNA, conferring on it an open structure. The RuvB hexamer acts as an ATP-dependent pump, pulling dsDNA into and through the RuvAB complex. HJ branch migration allows RuvC to scan DNA until it finds its consensus sequence, where it cleaves and resolves the cruciform DNA. The protein is Holliday junction branch migration complex subunit RuvA of Campylobacter concisus (strain 13826).